A 262-amino-acid polypeptide reads, in one-letter code: Cutinase 2 (262 aa).

Residue Y61 participates in poly(ethylene terephthalate) binding. Residue S131 is the Nucleophile of the active site. M132 and W156 together coordinate poly(ethylene terephthalate). Active-site charge relay system residues include D177 and H209. C242 and C260 are disulfide-bonded.

The protein belongs to the AB hydrolase superfamily.

Its subcellular location is the secreted. The protein resides in the periplasm. It catalyses the reaction a butanoate ester + H2O = an aliphatic alcohol + butanoate + H(+). The catalysed reaction is an acetyl ester + H2O = an aliphatic alcohol + acetate + H(+). It carries out the reaction (ethylene terephthalate)(n) + H2O = (ethylene terephthalate)(n-1) + 4-[(2-hydroxyethoxy)carbonyl]benzoate + H(+). The enzyme catalyses cutin + H2O = cutin monomers.. Its function is as follows. Catalyzes the hydrolysis of cutin, a polyester that forms the structure of plant cuticle. Shows esterase activity towards p-nitrophenol-linked aliphatic esters (pNP-aliphatic esters). Capable of degrading the plastic poly(ethylene terephthalate) (PET), the most abundant polyester plastic in the world. Capable of degrading the bioplastic poly(lactic acid) (PLLA). The protein is Cutinase 2 of Thermobifida cellulosilytica.